The sequence spans 2474 residues: Highly reducing polyketide synthase 40 (2474 aa).

A Ketosynthase family 3 (KS3) domain is found at 1–294; that stretch reads MFKETEIQQR…GSNAHIIIDD (294 aa). Catalysis depends on for beta-ketoacyl synthase activity residues cysteine 42, histidine 177, and histidine 217. The Malonyl-CoA:ACP transacylase (MAT) domain maps to 459-798; that stretch reads FVFTGQGAQW…GYESVLRRGT (340 aa). An N-terminal hotdog fold region spans residues 864–998; it reads HELLGAPVPD…GLVVTEYEQP (135 aa). Residues 864 to 1182 form the PKS/mFAS DH domain; it reads HELLGAPVPD…ITTVARSEGA (319 aa). Histidine 896 acts as the Proton acceptor; for dehydratase activity in catalysis. Residues 1027 to 1182 are C-terminal hotdog fold; the sequence is KVETSFRQLY…ITTVARSEGA (156 aa). The active-site Proton donor; for dehydratase activity is the aspartate 1093. The segment at 1232-1535 is methyltransferase (CMet) domain; the sequence is VEMMCFLYIK…DLHIYDFPDH (304 aa). Positions 1770–2063 constitute an Enoyl reductase (ER) domain; the sequence is GLLDSLQFQD…SGSHMGKLVL (294 aa). The Ketoreductase (KR) domain maps to 2087 to 2263; the sequence is ASYLLSGGLG…PGVAVDLGMI (177 aa). The 78-residue stretch at 2385 to 2462 folds into the Carrier domain; the sequence is DAAKIVSAAI…ELAELAAKRS (78 aa). An O-(pantetheine 4'-phosphoryl)serine modification is found at serine 2422.

Pantetheine 4'-phosphate serves as cofactor.

Its pathway is secondary metabolite biosynthesis. Functionally, highly reducing polyketide synthase; part of the gene cluster that mediates the biosynthesis of the gamma-pyrones fusapyrone (FPY) and deoxyfusapyrone (dFPY). FPY is an undecaketide and thus likely synthesized by the polyketide synthase FPY1 from acetyl-CoA functioning as starter unit and the addition of 10 malonyl-CoA extender units by successive Claisen-condensations. Next to this, FPY shares some rare features: C-glycosylated 4-deoxyglucose at C-3, a gem-dimethyl group at C-13, and an alpha-beta to beta-gamma double bond shift at C-20. During FPY biosynthesis mono-C-methyl groups are transferred to the tetra-, penta-, hexa- and heptaketide, while two C-methyl groups are transferred to the nonaketide, suggesting that the CMet domain is programmed to selectively catalyze two successive C-alpha-methylation reactions of the nonaketide, while other alpha-carbons are non- or mono-methylated only. While the origin of the 4'-deoxyglucose moiety remains opaque, its transfer to C-3 is most likely mediated by the C-glycosyltransferase FPY2. Next to this, the hydroxyl group present at C-33 and discriminating between FPY and dFPY, is likely to be installed by the cytochrome P450 monooxygenase FPY7. No putative function can be predicted for the remaining genes FPY3-FPY6. This chain is Highly reducing polyketide synthase 40, found in Fusarium mangiferae (Mango malformation disease fungus).